The chain runs to 394 residues: G2/mitotic-specific cyclin-B (394 aa).

Positions 360–394 (QSHPSPNSRLDQEEDMASSKFMSDQQATQELKSIR) are disordered. A compositionally biased stretch (polar residues) spans 379 to 394 (KFMSDQQATQELKSIR).

It belongs to the cyclin family. Cyclin AB subfamily. Interacts with the CDK1 protein kinase to form a serine/threonine kinase holoenzyme complex also known as maturation promoting factor (MPF). The cyclin subunit imparts substrate specificity to the complex.

Functionally, essential for the control of the cell cycle at the G2/M (mitosis) transition. The polypeptide is G2/mitotic-specific cyclin-B (Patiria pectinifera (Starfish)).